The sequence spans 229 residues: Peptidase E (229 aa).

Residues S120, D135, and H157 each act as charge relay system in the active site.

The protein belongs to the peptidase S51 family.

It localises to the cytoplasm. It catalyses the reaction Dipeptidase E catalyzes the hydrolysis of dipeptides Asp-|-Xaa. It does not act on peptides with N-terminal Glu, Asn or Gln, nor does it cleave isoaspartyl peptides.. Its function is as follows. Hydrolyzes dipeptides containing N-terminal aspartate residues. May play a role in allowing the cell to use peptide aspartate to spare carbon otherwise required for the synthesis of the aspartate family of amino acids. The protein is Peptidase E of Shigella boydii serotype 18 (strain CDC 3083-94 / BS512).